We begin with the raw amino-acid sequence, 498 residues long: MSTSKSENYLSELRKIIWPIEQYENKKFLPLAFMMFCILLNYSTLRSIKDGFVVTDIGTESISFLKTYIVLPSAVIAMIIYVKLCDILKQENVFYVITSFFLGYFALFAFVLYPYPDLVHPDHKTIESLSLAYPNFKWFIKIVGKWSFASFYTIAELWGTMMLSLLFWQFANQITKIAEAKRFYSMFGLLANLALPVTSVVIGYFLHEKTQIVAEHLKFVPLFVIMITSSFLIILTYRWMNKNVLTDPRLYDPALVKEKKTKAKLSFIESLKMIFTSKYVGYIALLIIAYGVSVNLVEGVWKSKVKELYPTKEAYTIYMGQFQFYQGWVAIAFMLIGSNILRKVSWLTAAMITPLMMFITGAAFFSFIFFDSVIAMNLTGILASSPLTLAVMIGMIQNVLSKGVKYSLFDATKNMAYIPLDKDLRVKGQAAVEVIGGRLGKSGGAIIQSTFFILFPVFGFIEATPYFASIFFIIVILWIFAVKGLNKEYQVLVNKNEK.

The Cytoplasmic segment spans residues 1–33 (MSTSKSENYLSELRKIIWPIEQYENKKFLPLAF). A helical transmembrane segment spans residues 34–54 (MMFCILLNYSTLRSIKDGFVV). Cys-37 and Cys-85 are joined by a disulfide. Over 55–67 (TDIGTESISFLKT) the chain is Extracellular. A helical transmembrane segment spans residues 68–88 (YIVLPSAVIAMIIYVKLCDIL). Residues 89-92 (KQEN) are Cytoplasmic-facing. The helical transmembrane segment at 93–113 (VFYVITSFFLGYFALFAFVLY) threads the bilayer. Residues 114-147 (PYPDLVHPDHKTIESLSLAYPNFKWFIKIVGKWS) lie on the Extracellular side of the membrane. Residues 148 to 168 (FASFYTIAELWGTMMLSLLFW) form a helical membrane-spanning segment. At 169-184 (QFANQITKIAEAKRFY) the chain is on the cytoplasmic side. The chain crosses the membrane as a helical span at residues 185–205 (SMFGLLANLALPVTSVVIGYF). The Extracellular segment spans residues 206 to 218 (LHEKTQIVAEHLK). A helical membrane pass occupies residues 219 to 239 (FVPLFVIMITSSFLIILTYRW). The Cytoplasmic segment spans residues 240-279 (MNKNVLTDPRLYDPALVKEKKTKAKLSFIESLKMIFTSKY). The chain crosses the membrane as a helical span at residues 280–300 (VGYIALLIIAYGVSVNLVEGV). The Extracellular segment spans residues 301-320 (WKSKVKELYPTKEAYTIYMG). The chain crosses the membrane as a helical span at residues 321–341 (QFQFYQGWVAIAFMLIGSNIL). The Cytoplasmic portion of the chain corresponds to 342–348 (RKVSWLT). The helical transmembrane segment at 349 to 369 (AAMITPLMMFITGAAFFSFIF) threads the bilayer. Residues 370–379 (FDSVIAMNLT) lie on the Extracellular side of the membrane. A helical transmembrane segment spans residues 380-400 (GILASSPLTLAVMIGMIQNVL). At 401-438 (SKGVKYSLFDATKNMAYIPLDKDLRVKGQAAVEVIGGR) the chain is on the cytoplasmic side. 436–442 (GGRLGKS) contributes to the ATP binding site. The chain crosses the membrane as a helical span at residues 439-459 (LGKSGGAIIQSTFFILFPVFG). Residues 460-465 (FIEATP) lie on the Extracellular side of the membrane. Residues 466–486 (YFASIFFIIVILWIFAVKGLN) traverse the membrane as a helical segment. Over 487 to 498 (KEYQVLVNKNEK) the chain is Cytoplasmic.

It belongs to the ADP/ATP translocase tlc family.

It localises to the cell membrane. In terms of biological role, provides the rickettsial cell with host ATP in exchange for rickettsial ADP. This is an obligate exchange system. This energy acquiring activity is an important component of rickettsial parasitism. This Rickettsia prowazekii (strain Madrid E) protein is ADP,ATP carrier protein 1 (tlcA).